A 601-amino-acid polypeptide reads, in one-letter code: MLNPENIRNFCIVAHIDHGKSTLSDRLIEKTKIIDERYHRNQMTDDMDIERERGITIKSHAVRIPYTAKDGKNYVLNFVDTPGHVDFSYEVSRAIASCEGAILIVDATQGVESQTLSNMYLALEHDLEILPVINKIDLPAADIDAAKHQIDHDLGLDSDAAVAVSAKTGENIDALFEAIITTFPPPKGSRDNPLQALIFDCHYDPYRGVVVHVRVFEGMIKPGMTIRFMNTGGEYKVEETGTFVLDLVKQDSLQAGEVGYIIAGIKTVSDVGVGDTITDAAAPCKAPLSGFKEVKPVVFSSVYPTDTNDYEELRESFEKLKLNDASLTWEKDSSLALGHGFRCGFLGLLHLEIVQERLEREFDQSVIFTAPSVRYKLTMRTGEEIICDNPADYPDEGLIASAEEPYIKATLITPTNYLGNVMSLCMEKRGVQTNMTYLDEKRVEMTYEMPLAEVLFDFYDRLKSISRGYASFDYEVIETRPTDLAKIDILINGKPVDALAQLAYKPSAYDKARLVCEKLKDEIPRQQFKIPIQGAIGSQIIARETISALRKDVLAKCYGGDITRKRKLLEKQKEGKKRMKMIGDVELPQSAFLAVLKTKED.

One can recognise a tr-type G domain in the interval 5-187 (ENIRNFCIVA…AIITTFPPPK (183 aa)). GTP contacts are provided by residues 17–22 (DHGKST) and 134–137 (NKID).

It belongs to the TRAFAC class translation factor GTPase superfamily. Classic translation factor GTPase family. LepA subfamily.

Its subcellular location is the cell inner membrane. The catalysed reaction is GTP + H2O = GDP + phosphate + H(+). Its function is as follows. Required for accurate and efficient protein synthesis under certain stress conditions. May act as a fidelity factor of the translation reaction, by catalyzing a one-codon backward translocation of tRNAs on improperly translocated ribosomes. Back-translocation proceeds from a post-translocation (POST) complex to a pre-translocation (PRE) complex, thus giving elongation factor G a second chance to translocate the tRNAs correctly. Binds to ribosomes in a GTP-dependent manner. The polypeptide is Elongation factor 4 (Treponema denticola (strain ATCC 35405 / DSM 14222 / CIP 103919 / JCM 8153 / KCTC 15104)).